A 502-amino-acid chain; its full sequence is MRCSPGGVWLALAASLLHVSLQGEFQRKLYKELVKNYNPLERPVANDSQPLTVYFSLSLLQIMDVDEKNQVLTTNIWLQMSWTDHYLQWNVSEYPGVKTVRFPDGQIWKPDILLYNSADERFDATFHTNVLVNSSGHCQYLPPGIFKSSCYIDVRWFPFDVQHCKLKFGSWSYGGWSLDLQMQEADISGYIPNGEWDLVGIPGKRSERFYECCKEPYPDVTFTVTMRRRTLYYGLNLLIPCVLISALALLVFLLPADSGEKISLGITVLLSLTVFMLLVAEIMPATSDSVPLIAQYFASTMIIVGLSVVVTVIVLQYHHHDPDGGKMPKWTRVILLNWCAWFLRMKRPGEDKVRPACQHKQRRCSLASVEMSAVAPPPASNGNLLYIGFRGLDGVHCVPTPDSGVVCGRMACSPTHDEHLLHGGQPPEGDPDLAKILEEVRYIANRFRCQDESEAVCSEWKFAACVVDRLCLMAFSVFTIICTIGILMSAPNFVEAVSKDFA.

The signal sequence occupies residues methionine 1 to glutamine 22. The Extracellular portion of the chain corresponds to glycine 23 to tyrosine 233. Arginine 42 and valine 44 together coordinate Ca(2+). Residues asparagine 46, asparagine 90, and asparagine 133 are each glycosylated (N-linked (GlcNAc...) asparagine). Cysteines 150 and 164 form a disulfide. Residues serine 172 and tyrosine 210 each coordinate Ca(2+). Cysteine 212 and cysteine 213 are disulfide-bonded. The next 3 helical transmembrane spans lie at glycine 234–leucine 254, glycine 259–valine 279, and leucine 292–leucine 315. The essential for TMEM35A/NACHO-mediated proper subunit assembly and trafficking to cell membrane stretch occupies residues glutamate 260 to threonine 267. Residues glutamine 316–valine 466 lie on the Cytoplasmic side of the membrane. The chain crosses the membrane as a helical span at residues valine 467–serine 489.

The protein belongs to the ligand-gated ion channel (TC 1.A.9) family. Acetylcholine receptor (TC 1.A.9.1) subfamily. Alpha-7/CHRNA7 sub-subfamily. Homopentamer. Can also form heteropentamers with CHRNB2, mainly found in basal forebrain cholinergic neurons. Interacts with RIC3; which is required for proper folding and assembly. Interacts with LYPD6. Interacts with CANX. Post-translationally, glycosylations at Asn-46, Asn-90 and Asn-133 are essential for TMEM35A/NACHO-mediated proper subunit assembly and trafficking to the cell membrane. Expressed in neuronal cells. Expressed in macrophages (at protein level).

It localises to the postsynaptic cell membrane. The protein resides in the cell membrane. The catalysed reaction is Ca(2+)(in) = Ca(2+)(out). The enzyme catalyses K(+)(in) = K(+)(out). It catalyses the reaction Na(+)(in) = Na(+)(out). It carries out the reaction choline(out) = choline(in). The catalysed reaction is NH4(+)(in) = NH4(+)(out). The enzyme catalyses L-arginine(in) = L-arginine(out). It catalyses the reaction guanidine(out) = guanidine(in). Activated by a myriad of ligands such as acetylcholine, cytisine, nicotine, choline and epibatidine. Oligomeric amyloid-beta protein 42 activates specifially CHRNA7:CHRNB2 nAchRs. Activity is modulated by positive allosteric modulators (PAMs), such as flavonoids, with a wide range of chemical diversity, pharmacological sensitivity and efficacy. AChR activity is inhibited by the antagonists alpha-conotoxons RgIA, ImI and ImII, small disulfide-constrained peptides from cone snails. Alpha-conotoxin PnIC selectively inhibits CHRNA7:CHRNB2 over CHRNA7 homopentamer. Its function is as follows. Component of neuronal acetylcholine receptors (nAChRs) that function as pentameric, ligand-gated cation channels with high calcium permeability among other activities. nAChRs are excitatory neurotrasnmitter receptors formed by a collection of nAChR subunits known to mediate synaptic transmission in the nervous system and the neuromuscular junction. Each nAchR subunit confers differential attributes to channel properties, including activation, deactivation and desensitization kinetics, pH sensitivity, cation permeability, and binding to allosteric modulators. CHRNA7 forms homopentameric neuronal acetylcholine receptors abundantly expressed in the central nervous system, characterized by fast desensitization and high calcium permeability. Also forms heteropentamers with CHRNB2, mainly expressed in basal forebrain cholinergic neurons. Involved in the modulation of calcium-dependent signaling pathways and influences the release of neurotransmitters, including dopamine, glutamate and GABA. Also expressed in non-neuronal cells such as immune cells like lymphocytes, monocytes and macrophages. In T cells, activation induces metabotropic signaling that results in an increase of intracellular Ca2+ concentrations, independent of ionotropic receptor functions. In macrophages, required for acetylcholine-mediated inhibition of TNF and other inflammatory cytokine release. Once activated by acetylcholine, nicotine or other agonists, selectively inhibits production of pro-inflammatory cytokines while leaving anti-inflammatory cytokines undisturbed. Stimulates the cholinergic anti-inflammatory pathway, controlling inflammation by inhibiting NFKB nuclear translocation and activating the JAK2-STAT3 pathway, independently of ion channel activity. Also expressed in the urothelium where it modulates reflex bladder activity by increasing intracellular calcium through internal stores and decreasing basal ATP release. The chain is Neuronal acetylcholine receptor subunit alpha-7 from Homo sapiens (Human).